A 205-amino-acid chain; its full sequence is MQEYNQPLRIGVGGPVGSGKTALLEVLCKAMRDTYQIAVVTNDIYTQEDAKILTRAEALDADRIIGVETGGCPHTAIREDASMNLAAVEELAIRHKNLDIVFVESGGDNLSATFSPELADLTIYVIDVAEGEKIPRKGGPGITHSDLLVINKIDLAPYVGASLEVMEADTARMRPVKPYVFTNLKKKVGLETIIEFIIDKGMLGR.

A GTP-binding site is contributed by Gly14 to Thr21.

The protein belongs to the SIMIBI class G3E GTPase family. UreG subfamily. Homodimer. UreD, UreF and UreG form a complex that acts as a GTP-hydrolysis-dependent molecular chaperone, activating the urease apoprotein by helping to assemble the nickel containing metallocenter of UreC. The UreE protein probably delivers the nickel.

The protein localises to the cytoplasm. Functionally, facilitates the functional incorporation of the urease nickel metallocenter. This process requires GTP hydrolysis, probably effectuated by UreG. In Escherichia coli, this protein is Urease accessory protein UreG.